The chain runs to 221 residues: Small ribosomal subunit protein uS3 (221 aa).

In terms of domain architecture, KH type-2 spans 39–108 (IRKFVKKRSY…NVIINIVEVK (70 aa)).

This sequence belongs to the universal ribosomal protein uS3 family. Part of the 30S ribosomal subunit. Forms a tight complex with proteins S10 and S14.

In terms of biological role, binds the lower part of the 30S subunit head. Binds mRNA in the 70S ribosome, positioning it for translation. This chain is Small ribosomal subunit protein uS3, found in Clostridium novyi (strain NT).